The primary structure comprises 274 residues: Nuclease (274 aa).

An N-terminal signal peptide occupies residues 1–24; sequence MGICGKLGVAALVALIVGCSPVQS. His-124 functions as the Proton acceptor in the catalytic mechanism. Mn(2+)-binding residues include Asn-155, Asp-246, Glu-249, Asp-255, Phe-256, Gln-265, and Glu-269.

The protein belongs to the DNA/RNA non-specific endonuclease family. Monomer. Requires Mn(2+) as cofactor. Mg(2+) serves as cofactor. Ca(2+) is required as a cofactor. The cofactor is Co(2+). The N-terminus is blocked.

The protein resides in the periplasm. Its function is as follows. Catalyzes the degradation of both RNA and DNA; has the potential to act as an endonuclease. The sequence is that of Nuclease (nucA) from Nostoc sp. (strain PCC 7120 / SAG 25.82 / UTEX 2576).